Reading from the N-terminus, the 190-residue chain is MSSVQSKILSQAPSELELQVAKTFIDLESSSPELKADLRPLQIKSIREIDVTGGKKALVLFVPVPALSAYHKVQTKLTRELEKKFPDRHVIFLAERRILPKPSRTSRQVQKRPRSRTLTAVHDKVLEDMVFPTEIVGKRVRYLVGGNKIQKVLLDSKDVQQIDYKLESFQAVYNKLTGKQIVFEIPSQTN.

An N-acetylserine modification is found at Ser-2. Ser-10 and Ser-31 each carry phosphoserine. Residues Lys-83 and Lys-84 each participate in a glycyl lysine isopeptide (Lys-Gly) (interchain with G-Cter in ubiquitin) cross-link.

It belongs to the eukaryotic ribosomal protein eS7 family. As to quaternary structure, component of the small ribosomal subunit (SSU). Mature yeast ribosomes consist of a small (40S) and a large (60S) subunit. The 40S small subunit contains 1 molecule of ribosomal RNA (18S rRNA) and 33 different proteins (encoded by 57 genes). The large 60S subunit contains 3 rRNA molecules (25S, 5.8S and 5S rRNA) and 46 different proteins (encoded by 81 genes). Interacts with snoRNA U3. uS11 interacts with MPP10. Component of the ribosomal small subunit (SSU) processome composed of at least 40 protein subunits and snoRNA U3. N-terminally acetylated by acetyltransferase NatA. In terms of processing, ubiquitinated at Lys-83 and Lys-84 in response to stalled ribosomes, leading to activation of the No-Go Decay (NGD) pathway: first monoubiquitinated by MOT2/NOT4, followed by formation by HEL2 of 'Lys-63'-linked polyubiquitin chains on monoubiquitin.

The protein localises to the cytoplasm. It is found in the nucleus. It localises to the nucleolus. In terms of biological role, component of the ribosome, a large ribonucleoprotein complex responsible for the synthesis of proteins in the cell. The small ribosomal subunit (SSU) binds messenger RNAs (mRNAs) and translates the encoded message by selecting cognate aminoacyl-transfer RNA (tRNA) molecules. The large subunit (LSU) contains the ribosomal catalytic site termed the peptidyl transferase center (PTC), which catalyzes the formation of peptide bonds, thereby polymerizing the amino acids delivered by tRNAs into a polypeptide chain. The nascent polypeptides leave the ribosome through a tunnel in the LSU and interact with protein factors that function in enzymatic processing, targeting, and the membrane insertion of nascent chains at the exit of the ribosomal tunnel. eS7 is involved in nucleolar processing of pre-18S ribosomal RNA and ribosome assembly. This chain is Small ribosomal subunit protein eS7B, found in Saccharomyces cerevisiae (strain ATCC 204508 / S288c) (Baker's yeast).